We begin with the raw amino-acid sequence, 708 residues long: Matrix metalloproteinase-9 (708 aa).

The N-terminal stretch at 1 to 19 is a signal peptide; the sequence is MSPWQPLLLVLLALGYSFA. A propeptide spans 20 to 107 (activation peptide); sequence APHQRQPTYV…PRCGVPDVGK (88 aa). Asn39 is a glycosylation site (N-linked (GlcNAc...) asparagine). A Cysteine switch motif is present at residues 98–105; sequence PRCGVPDV. Cys100 lines the Zn(2+) pocket. N-linked (GlcNAc...) asparagine glycosylation is present at Asn121. Residues Asp132 and Asp166 each contribute to the Ca(2+) site. The Zn(2+) site is built by His176 and Asp178. Residues Asp183, Gly184, Asp186, and Leu188 each coordinate Ca(2+). His191 serves as a coordination point for Zn(2+). Residues Gly198, Gln200, and Asp202 each contribute to the Ca(2+) site. His204 is a binding site for Zn(2+). Ca(2+)-binding residues include Asp206, Asp207, and Glu209. 3 consecutive Fibronectin type-II domains span residues 226 to 274, 284 to 332, and 343 to 391; these read ANGA…FCPS, GDGK…FCPT, and SAGE…FCPD. 6 cysteine pairs are disulfide-bonded: Cys231-Cys257, Cys245-Cys272, Cys289-Cys315, Cys303-Cys330, Cys348-Cys374, and Cys362-Cys389. Position 402 (His402) interacts with Zn(2+). Residue Glu403 is part of the active site. Zn(2+) contacts are provided by His406 and His412. The disordered stretch occupies residues 441–520; that stretch reads HHLYGRGSKP…SSTPDDNPCN (80 aa). The segment covering 480 to 490 has biased composition (low complexity); sequence PTGGPTVAPTG. Residues 491 to 502 are compositionally biased toward pro residues; sequence APSPGPTGPPTA. A disulfide bridge connects residues Cys519 and Cys707. 4 Hemopexin repeats span residues 521 to 566, 567 to 611, 613 to 660, and 661 to 707; these read VDVF…WPAF, PSKL…GLGS, VTLV…FSGV, and PWNS…LLQC.

Belongs to the peptidase M10A family. As to quaternary structure, exists as monomer or homodimer; disulfide-linked. Also exists as heterodimer with LCN2. Macrophages and transformed cell lines produce only the monomeric form. Interacts with ECM1. Zn(2+) serves as cofactor. Requires Ca(2+) as cofactor. Post-translationally, N- and O-glycosylated.

The protein resides in the secreted. Its subcellular location is the extracellular space. It is found in the extracellular matrix. It catalyses the reaction Cleavage of gelatin types I and V and collagen types IV and V.. In terms of biological role, matrix metalloproteinase that plays an essential role in local proteolysis of the extracellular matrix and in leukocyte migration. Could play a role in bone osteoclastic resorption. Cleaves KiSS1 at a Gly-|-Leu bond. Cleaves NINJ1 to generate the Secreted ninjurin-1 form. Cleaves type IV and type V collagen into large C-terminal three quarter fragments and shorter N-terminal one quarter fragments. Degrades fibronectin but not laminin or Pz-peptide. The sequence is that of Matrix metalloproteinase-9 (Mmp9) from Rattus norvegicus (Rat).